The sequence spans 208 residues: Uracil phosphoribosyltransferase (208 aa).

Residues arginine 78, arginine 103, and 130–138 (DPMLATGGS) contribute to the 5-phospho-alpha-D-ribose 1-diphosphate site. Residues isoleucine 193 and 198-200 (GDA) contribute to the uracil site. Aspartate 199 serves as a coordination point for 5-phospho-alpha-D-ribose 1-diphosphate.

It belongs to the UPRTase family. Mg(2+) is required as a cofactor.

It catalyses the reaction UMP + diphosphate = 5-phospho-alpha-D-ribose 1-diphosphate + uracil. The protein operates within pyrimidine metabolism; UMP biosynthesis via salvage pathway; UMP from uracil: step 1/1. Allosterically activated by GTP. Functionally, catalyzes the conversion of uracil and 5-phospho-alpha-D-ribose 1-diphosphate (PRPP) to UMP and diphosphate. This chain is Uracil phosphoribosyltransferase, found in Neisseria meningitidis serogroup C (strain 053442).